The primary structure comprises 599 residues: Elongation factor 4 (599 aa).

The region spanning 2-184 (KNIRNFSIIA…RLVRDIPPPQ (183 aa)) is the tr-type G domain. GTP is bound by residues 14–19 (DHGKST) and 131–134 (NKID).

It belongs to the TRAFAC class translation factor GTPase superfamily. Classic translation factor GTPase family. LepA subfamily.

The protein resides in the cell inner membrane. It carries out the reaction GTP + H2O = GDP + phosphate + H(+). Its function is as follows. Required for accurate and efficient protein synthesis under certain stress conditions. May act as a fidelity factor of the translation reaction, by catalyzing a one-codon backward translocation of tRNAs on improperly translocated ribosomes. Back-translocation proceeds from a post-translocation (POST) complex to a pre-translocation (PRE) complex, thus giving elongation factor G a second chance to translocate the tRNAs correctly. Binds to ribosomes in a GTP-dependent manner. This is Elongation factor 4 from Salmonella agona (strain SL483).